Consider the following 569-residue polypeptide: Urease subunit alpha (569 aa).

Positions 131–569 constitute a Urease domain; that stretch reads GSIDTHIHFI…VPMAQKYFLL (439 aa). Histidine 136, histidine 138, and lysine 219 together coordinate Ni(2+). Residue lysine 219 is modified to N6-carboxylysine. Histidine 221 lines the substrate pocket. Ni(2+)-binding residues include histidine 248 and histidine 274. Catalysis depends on histidine 322, which acts as the Proton donor. Aspartate 362 contributes to the Ni(2+) binding site.

The protein belongs to the metallo-dependent hydrolases superfamily. Urease alpha subunit family. As to quaternary structure, heterotrimer of UreA (gamma), UreB (beta) and UreC (alpha) subunits. Two heterotrimers associate to form the active enzyme. In most bacteria it is thought that three heterotrimers form the active enzyme. Ni cation is required as a cofactor. Carboxylation allows a single lysine to coordinate two nickel ions.

It is found in the cytoplasm. The catalysed reaction is urea + 2 H2O + H(+) = hydrogencarbonate + 2 NH4(+). Its pathway is nitrogen metabolism; urea degradation; CO(2) and NH(3) from urea (urease route): step 1/1. Inhibited by HgCl2 and acetohydroxyamic acid slightly by EDTA, but not by boric acid or L-methionine-DL-sulfoximine. This Prochlorococcus marinus subsp. pastoris (strain PCC 9511) protein is Urease subunit alpha.